The primary structure comprises 320 residues: ATP-dependent 6-phosphofructokinase (320 aa).

G11 lines the ATP pocket. Residue 21-25 (RAIAR) participates in ADP binding. Residues 72–73 (RF) and 102–105 (GDGS) each bind ATP. Mg(2+) is bound at residue D103. Substrate is bound by residues 125–127 (TID), R162, and 169–171 (MGR). Residue D127 is the Proton acceptor of the active site. ADP is bound by residues 185–187 (GAD) and 213–215 (KDH). Substrate contacts are provided by residues E222, R243, and 249-252 (HIQR).

The protein belongs to the phosphofructokinase type A (PFKA) family. ATP-dependent PFK group I subfamily. Prokaryotic clade 'B1' sub-subfamily. In terms of assembly, homotetramer. The cofactor is Mg(2+).

It is found in the cytoplasm. It carries out the reaction beta-D-fructose 6-phosphate + ATP = beta-D-fructose 1,6-bisphosphate + ADP + H(+). Its pathway is carbohydrate degradation; glycolysis; D-glyceraldehyde 3-phosphate and glycerone phosphate from D-glucose: step 3/4. With respect to regulation, allosterically activated by ADP and other diphosphonucleosides, and allosterically inhibited by phosphoenolpyruvate. Functionally, catalyzes the phosphorylation of D-fructose 6-phosphate to fructose 1,6-bisphosphate by ATP, the first committing step of glycolysis. This chain is ATP-dependent 6-phosphofructokinase, found in Ligilactobacillus salivarius (strain UCC118) (Lactobacillus salivarius).